The following is a 1274-amino-acid chain: Enamelin (1274 aa).

An N-terminal signal peptide occupies residues 1-38 (MLLLQCRNPTSPPKPCGLVPNVKMSLLVFLGLLGVSAA). A compositionally biased stretch (pro residues) spans 103–115 (PVPNGWQQPPMPN). Disordered regions lie at residues 103–413 (PVPN…VGAN), 476–610 (IGAN…NNPN), 668–700 (PFQSETKKPELKHGTHQPAYPKKIPSPTRKHFP), 712–734 (LPPLKEDYGRQDENLRHPSYGSR), and 753–814 (YIKS…EEMN). The span at 117 to 127 (PSKTDQTQETA) shows a compositional bias: polar residues. Over residues 128-142 (KPNQTNPQEPQPQKQ) the composition is skewed to low complexity. A glycan (N-linked (GlcNAc...) asparagine) is linked at Asn-130. Over residues 143 to 158 (PLKEPPNEAARAKDDA) the composition is skewed to basic and acidic residues. The span at 174-185 (YPQPPWPIPQRG) shows a compositional bias: pro residues. 2 positions are modified to phosphoserine: Ser-196 and Ser-219. The segment covering 225 to 239 (DYEKPKEKDPPKPED) has biased composition (basic and acidic residues). Residues 249 to 272 (ASTNSTVPDANATQSIPEGGNDTS) are compositionally biased toward polar residues. N-linked (GlcNAc...) asparagine glycosylation is found at Asn-252, Asn-259, and Asn-269. Residues 273-287 (PIGNTGPGPNAGNNP) are compositionally biased toward low complexity. The N-linked (GlcNAc...) asparagine glycan is linked to Asn-300. The span at 318–330 (PNIYENYPYPNYP) shows a compositional bias: low complexity. Polar residues-rich tracts occupy residues 331-344 (SERQWQTTGTQGPR), 486-503 (SIGTNPAANKPSIGTNPA), 522-549 (TNPSSNQPFLRSNQASNKPFMRSNQASN), and 565-574 (VTVSHNMKTQ). Positions 575–587 (NPKEKSLGQKERT) are enriched in basic and acidic residues. Over residues 588-598 (VTPTKDASNPW) the composition is skewed to polar residues. Positions 715–727 (LKEDYGRQDENLR) are enriched in basic and acidic residues. A compositionally biased stretch (polar residues) spans 753-766 (YIKSNPWDKSSPST). Positions 787 to 801 (QYNEEDPIDPNEDES) are enriched in acidic residues. Residue Asn-1066 is glycosylated (N-linked (GlcNAc...) asparagine). 2 disordered regions span residues 1071–1097 (KLTAESPNPSPFGDGVPTVRKNTPYSG) and 1109–1128 (SEASSSQPKNTPCLKSDLGG).

In terms of processing, phosphorylated by FAM20C in vitro. Expressed in developing teeth.

Its subcellular location is the secreted. It localises to the extracellular space. The protein localises to the extracellular matrix. Its function is as follows. Involved in the mineralization and structural organization of enamel. Involved in the extension of enamel during the secretory stage of dental enamel formation. In Mus musculus (Mouse), this protein is Enamelin (Enam).